The following is a 576-amino-acid chain: V-type ATP synthase alpha chain (576 aa).

238 to 245 contacts ATP; that stretch reads GPFGAGKT.

The protein belongs to the ATPase alpha/beta chains family.

The enzyme catalyses ATP + H2O + 4 H(+)(in) = ADP + phosphate + 5 H(+)(out). Its function is as follows. Produces ATP from ADP in the presence of a proton gradient across the membrane. The V-type alpha chain is a catalytic subunit. This is V-type ATP synthase alpha chain from Borrelia turicatae (strain 91E135).